Here is a 450-residue protein sequence, read N- to C-terminus: tRNA modification GTPase MnmE (450 aa).

(6S)-5-formyl-5,6,7,8-tetrahydrofolate contacts are provided by Arg-25, Glu-83, and Lys-122. The TrmE-type G domain occupies 218–377 (GFKVAIIGKP…QMEALLDSIG (160 aa)). K(+) is bound at residue Asn-228. GTP contacts are provided by residues 228 to 233 (NVGKSS), 247 to 253 (SDIAGTT), and 272 to 275 (DTAG). Ser-232 provides a ligand contact to Mg(2+). Positions 247, 249, and 252 each coordinate K(+). A Mg(2+)-binding site is contributed by Thr-253. (6S)-5-formyl-5,6,7,8-tetrahydrofolate is bound at residue Lys-450.

This sequence belongs to the TRAFAC class TrmE-Era-EngA-EngB-Septin-like GTPase superfamily. TrmE GTPase family. In terms of assembly, homodimer. Heterotetramer of two MnmE and two MnmG subunits. Requires K(+) as cofactor.

It localises to the cytoplasm. Its function is as follows. Exhibits a very high intrinsic GTPase hydrolysis rate. Involved in the addition of a carboxymethylaminomethyl (cmnm) group at the wobble position (U34) of certain tRNAs, forming tRNA-cmnm(5)s(2)U34. The sequence is that of tRNA modification GTPase MnmE from Sulfurovum sp. (strain NBC37-1).